Here is a 244-residue protein sequence, read N- to C-terminus: Ferredoxin--NADP reductase B (244 aa).

The 103-residue stretch at 4–106 (AEPFEARLVA…VGPHGLFTRD (103 aa)) folds into the FAD-binding FR-type domain. FAD contacts are provided by residues 55–58 (RAYS) and Thr120.

It belongs to the ferredoxin--NADP reductase type 1 family. FAD serves as cofactor.

It catalyses the reaction 2 reduced [4Fe-4S]-[ferredoxin] + NADP(+) + H(+) = 2 oxidized [4Fe-4S]-[ferredoxin] + NADPH. In terms of biological role, transports electrons between NADPH and ferredoxin. Can transfer electrons to ferredoxins Fdx2 and Fdx8. Prefers NADPH to NADH. The polypeptide is Ferredoxin--NADP reductase B (Sorangium cellulosum (strain So ce56) (Polyangium cellulosum (strain So ce56))).